The following is a 107-amino-acid chain: Anti-adapter protein IraM (107 aa).

Belongs to the IraM/RssC family.

The protein localises to the cytoplasm. Functionally, inhibits RpoS proteolysis by regulating RssB activity, thereby increasing the stability of the sigma stress factor RpoS during magnesium starvation. This chain is Anti-adapter protein IraM, found in Shigella dysenteriae serotype 1 (strain Sd197).